Consider the following 306-residue polypeptide: 4-hydroxy-tetrahydrodipicolinate synthase (306 aa).

Threonine 46 is a pyruvate binding site. Tyrosine 134 serves as the catalytic Proton donor/acceptor. Lysine 162 serves as the catalytic Schiff-base intermediate with substrate. Valine 204 contributes to the pyruvate binding site.

The protein belongs to the DapA family. As to quaternary structure, homotetramer; dimer of dimers.

It localises to the cytoplasm. The catalysed reaction is L-aspartate 4-semialdehyde + pyruvate = (2S,4S)-4-hydroxy-2,3,4,5-tetrahydrodipicolinate + H2O + H(+). Its pathway is amino-acid biosynthesis; L-lysine biosynthesis via DAP pathway; (S)-tetrahydrodipicolinate from L-aspartate: step 3/4. Its function is as follows. Catalyzes the condensation of (S)-aspartate-beta-semialdehyde [(S)-ASA] and pyruvate to 4-hydroxy-tetrahydrodipicolinate (HTPA). In Synechococcus sp. (strain JA-2-3B'a(2-13)) (Cyanobacteria bacterium Yellowstone B-Prime), this protein is 4-hydroxy-tetrahydrodipicolinate synthase.